Reading from the N-terminus, the 241-residue chain is Glucosamine-6-phosphate deaminase (241 aa).

Asp-67 functions as the Proton acceptor; for enolization step in the catalytic mechanism. Residue Asn-136 is the For ring-opening step of the active site. His-138 acts as the Proton acceptor; for ring-opening step in catalysis. Glu-143 (for ring-opening step) is an active-site residue.

This sequence belongs to the glucosamine/galactosamine-6-phosphate isomerase family. NagB subfamily.

The enzyme catalyses alpha-D-glucosamine 6-phosphate + H2O = beta-D-fructose 6-phosphate + NH4(+). Its pathway is amino-sugar metabolism; N-acetylneuraminate degradation; D-fructose 6-phosphate from N-acetylneuraminate: step 5/5. Functionally, catalyzes the reversible isomerization-deamination of glucosamine 6-phosphate (GlcN6P) to form fructose 6-phosphate (Fru6P) and ammonium ion. In Clostridium tetani (strain Massachusetts / E88), this protein is Glucosamine-6-phosphate deaminase.